The chain runs to 44 residues: Cytochrome b559 subunit beta (44 aa).

Residues 19–35 (WLAIHGIAIPTVFFLGA) form a helical membrane-spanning segment. His-23 is a heme binding site.

This sequence belongs to the PsbE/PsbF family. As to quaternary structure, heterodimer of an alpha subunit and a beta subunit. PSII is composed of 1 copy each of membrane proteins PsbA, PsbB, PsbC, PsbD, PsbE, PsbF, PsbH, PsbI, PsbJ, PsbK, PsbL, PsbM, PsbT, PsbX, PsbY, PsbZ, Psb30/Ycf12, at least 3 peripheral proteins of the oxygen-evolving complex and a large number of cofactors. It forms dimeric complexes. Requires heme b as cofactor.

The protein resides in the plastid. The protein localises to the chloroplast thylakoid membrane. This b-type cytochrome is tightly associated with the reaction center of photosystem II (PSII). PSII is a light-driven water:plastoquinone oxidoreductase that uses light energy to abstract electrons from H(2)O, generating O(2) and a proton gradient subsequently used for ATP formation. It consists of a core antenna complex that captures photons, and an electron transfer chain that converts photonic excitation into a charge separation. This Gracilaria tenuistipitata var. liui (Red alga) protein is Cytochrome b559 subunit beta.